A 487-amino-acid chain; its full sequence is Glycogen synthase (487 aa).

An ADP-alpha-D-glucose-binding site is contributed by Lys-15.

Belongs to the glycosyltransferase 1 family. Bacterial/plant glycogen synthase subfamily.

It catalyses the reaction [(1-&gt;4)-alpha-D-glucosyl](n) + ADP-alpha-D-glucose = [(1-&gt;4)-alpha-D-glucosyl](n+1) + ADP + H(+). It functions in the pathway glycan biosynthesis; glycogen biosynthesis. Functionally, synthesizes alpha-1,4-glucan chains using ADP-glucose. In Leptothrix cholodnii (strain ATCC 51168 / LMG 8142 / SP-6) (Leptothrix discophora (strain SP-6)), this protein is Glycogen synthase.